The chain runs to 169 residues: Nucleoside diphosphate kinase 3-A (169 aa).

Residues lysine 29, arginine 105, threonine 111, arginine 122, valine 129, and asparagine 132 each contribute to the ADP site. Histidine 135 (pros-phosphohistidine intermediate) is an active-site residue.

It belongs to the NDK family. Homohexamer. It depends on Mg(2+) as a cofactor.

The protein localises to the mitochondrion outer membrane. Its subcellular location is the cytoplasm. It is found in the cytoskeleton. It localises to the cilium basal body. The catalysed reaction is a 2'-deoxyribonucleoside 5'-diphosphate + ATP = a 2'-deoxyribonucleoside 5'-triphosphate + ADP. The enzyme catalyses a ribonucleoside 5'-diphosphate + ATP = a ribonucleoside 5'-triphosphate + ADP. Catalyzes the phosphorylation of ribonucleosides and deoxyribonucleoside diphosphates, other than ATP, into the corresponding triphosphates with ATP as the major phosphate donor. The ATP gamma phosphate is transferred to the nucleoside diphosphate beta phosphate via a ping-pong mechanism, using a phosphorylated active-site intermediate. Through the catalyzed exchange of gamma-phosphate between di- and triphosphonucleosides participates in regulation of intracellular nucleotide homeostasis. Required for ciliary function during renal development. In terms of biological role, independently of its kinase activity, facilitates mitochondrial tethering prior to membrane fusion through its direct membrane-binding and hexamerization. Implicated in repair of both single- and double-stranded breaks in DNA, independently of its kinase activity. This chain is Nucleoside diphosphate kinase 3-A, found in Xenopus laevis (African clawed frog).